The sequence spans 203 residues: Adenosylcobalamin/alpha-ribazole phosphatase (203 aa).

Catalysis depends on H8, which acts as the Tele-phosphohistidine intermediate. The Proton donor/acceptor role is filled by E81.

This sequence belongs to the phosphoglycerate mutase family.

The enzyme catalyses adenosylcob(III)alamin 5'-phosphate + H2O = adenosylcob(III)alamin + phosphate. It carries out the reaction alpha-ribazole 5'-phosphate + H2O = alpha-ribazole + phosphate. Its pathway is nucleoside biosynthesis; alpha-ribazole biosynthesis; alpha-ribazole from 5,6-dimethylbenzimidazole: step 2/2. Its function is as follows. Catalyzes the conversion of adenosylcobalamin 5'-phosphate to adenosylcobalamin (vitamin B12); involved in the assembly of the nucleotide loop of cobalamin. Also catalyzes the hydrolysis of the phospho group from alpha-ribazole 5'-phosphate to form alpha-ribazole. The protein is Adenosylcobalamin/alpha-ribazole phosphatase (cobC) of Escherichia coli (strain K12).